Reading from the N-terminus, the 257-residue chain is ATP synthase delta chain, chloroplastic (257 aa).

A chloroplast-targeting transit peptide spans 1 to 70; it reads MAALQNPVAL…PRGGALGTRM (70 aa).

It belongs to the ATPase delta chain family. As to quaternary structure, F-type ATPases have 2 components, CF(1) - the catalytic core - and CF(0) - the membrane proton channel. CF(1) has five subunits: alpha(3), beta(3), gamma(1), delta(1), epsilon(1). CF(0) has three main subunits: a, b and c.

Its subcellular location is the plastid. The protein localises to the chloroplast thylakoid membrane. This protein seems to be part of the stalk that links CF(0) to CF(1). It either transmits conformational changes from CF(0) into CF(1) or is implicated in proton conduction. The protein is ATP synthase delta chain, chloroplastic (ATPD) of Spinacia oleracea (Spinach).